The primary structure comprises 258 residues: Spindlin-2B (258 aa).

Positions 1–23 (MKTPNAQEAEGQQTRAAAGRATG) are enriched in low complexity. The disordered stretch occupies residues 1–49 (MKTPNAQEAEGQQTRAAAGRATGSANMTKKKVSQKKQRGRPSSQPRRNI). Residues 28-39 (TKKKVSQKKQRG) show a composition bias toward basic residues. Tudor-like domain regions lie at residues 50–99 (VGCR…LELH), 129–178 (IGKA…YQLL), and 210–255 (IGKH…YDLV). Histone H3K4me3 and H3R8me2a binding stretches follow at residues Glu-138 and 246 to 248 (DFH).

It belongs to the SPIN/STSY family. As to quaternary structure, interacts with C11orf84/SPINDOC. Detected in all the examined tissues with highest expression in liver, followed by heart, stomach, kidney, skeletal muscle, placenta, and pancreas.

The protein resides in the nucleus. In terms of biological role, involved in the regulation of cell cycle progression, this activity is related to the inhibition of apoptosis following the removal of essential growth factors. Exhibits H3K4me3-binding activity. The chain is Spindlin-2B (SPIN2B) from Homo sapiens (Human).